A 122-amino-acid polypeptide reads, in one-letter code: Large ribosomal subunit protein uL14 (122 aa).

This sequence belongs to the universal ribosomal protein uL14 family. In terms of assembly, part of the 50S ribosomal subunit. Forms a cluster with proteins L3 and L19. In the 70S ribosome, L14 and L19 interact and together make contacts with the 16S rRNA in bridges B5 and B8.

Its function is as follows. Binds to 23S rRNA. Forms part of two intersubunit bridges in the 70S ribosome. This chain is Large ribosomal subunit protein uL14, found in Thermosynechococcus vestitus (strain NIES-2133 / IAM M-273 / BP-1).